The primary structure comprises 145 residues: 3-hydroxyacyl-[acyl-carrier-protein] dehydratase FabZ (145 aa).

H49 is a catalytic residue.

It belongs to the thioester dehydratase family. FabZ subfamily.

The protein resides in the cytoplasm. The enzyme catalyses a (3R)-hydroxyacyl-[ACP] = a (2E)-enoyl-[ACP] + H2O. Its function is as follows. Involved in unsaturated fatty acids biosynthesis. Catalyzes the dehydration of short chain beta-hydroxyacyl-ACPs and long chain saturated and unsaturated beta-hydroxyacyl-ACPs. The protein is 3-hydroxyacyl-[acyl-carrier-protein] dehydratase FabZ of Rickettsia akari (strain Hartford).